Reading from the N-terminus, the 1152-residue chain is Nardilysin (1152 aa).

Positions 1-20 are cleaved as a signal peptide; that stretch reads MLRKVTVAAVCATRRKLCEA. Disordered regions lie at residues 81-108 and 133-208; these read LGADESEEEGRRGSLSNAGDPEIVKSPS and MEGK…KKTT. Phosphoserine occurs at positions 86, 94, and 96. The span at 141-198 shows a compositional bias: acidic residues; it reads TDDEEEEEVEEEEEDDDEDSGAEIEDDDEEGFDDEDEFDDEHDDDLDTEDNELEELEE. His-234 serves as a coordination point for Zn(2+). Glu-237 serves as the catalytic Proton acceptor. 2 residues coordinate Zn(2+): His-238 and Glu-315.

This sequence belongs to the peptidase M16 family. In terms of assembly, interacts with BACE1 and NRG1. It depends on Zn(2+) as a cofactor.

Its subcellular location is the mitochondrion. The protein resides in the cell projection. It is found in the dendrite. It catalyses the reaction Hydrolysis of polypeptides, preferably at -Xaa-|-Arg-Lys-, and less commonly at -Arg-|-Arg-Xaa-, in which Xaa is not Arg or Lys.. Cleaves peptide substrates on the N-terminus of arginine residues in dibasic pairs. Is a critical activator of BACE1- and ADAM17-mediated pro-neuregulin ectodomain shedding, involved in the positive regulation of axonal maturation and myelination. Required for proper functioning of 2-oxoglutarate dehydrogenase (OGDH). The polypeptide is Nardilysin (Pongo abelii (Sumatran orangutan)).